A 488-amino-acid chain; its full sequence is N-succinylglutamate 5-semialdehyde dehydrogenase (488 aa).

221–226 (GSSRTG) is an NAD(+) binding site. Residues E244 and C278 contribute to the active site.

Belongs to the aldehyde dehydrogenase family. AstD subfamily.

It carries out the reaction N-succinyl-L-glutamate 5-semialdehyde + NAD(+) + H2O = N-succinyl-L-glutamate + NADH + 2 H(+). It participates in amino-acid degradation; L-arginine degradation via AST pathway; L-glutamate and succinate from L-arginine: step 4/5. In terms of biological role, catalyzes the NAD-dependent reduction of succinylglutamate semialdehyde into succinylglutamate. This chain is N-succinylglutamate 5-semialdehyde dehydrogenase, found in Pseudomonas fluorescens (strain SBW25).